Consider the following 509-residue polypeptide: ATP synthase subunit alpha (509 aa).

ATP is bound at residue glycine 169–threonine 176.

This sequence belongs to the ATPase alpha/beta chains family. As to quaternary structure, F-type ATPases have 2 components, CF(1) - the catalytic core - and CF(0) - the membrane proton channel. CF(1) has five subunits: alpha(3), beta(3), gamma(1), delta(1), epsilon(1). CF(0) has three main subunits: a(1), b(2) and c(9-12). The alpha and beta chains form an alternating ring which encloses part of the gamma chain. CF(1) is attached to CF(0) by a central stalk formed by the gamma and epsilon chains, while a peripheral stalk is formed by the delta and b chains.

The protein localises to the cell inner membrane. It catalyses the reaction ATP + H2O + 4 H(+)(in) = ADP + phosphate + 5 H(+)(out). In terms of biological role, produces ATP from ADP in the presence of a proton gradient across the membrane. The alpha chain is a regulatory subunit. The chain is ATP synthase subunit alpha from Bradyrhizobium diazoefficiens (strain JCM 10833 / BCRC 13528 / IAM 13628 / NBRC 14792 / USDA 110).